Consider the following 363-residue polypeptide: MNGSPTPKRYSSKSSRLYDDYYNIPYQYSNPTPMNRDYNDVGSRINADKLVPEEYKRNTEFINKAVQQNKELNFKLREKQNEIFELKKIAETLRSKLEKYVDITKKLEDQNLNLQIKISDLEKKLSDANSTFKEMRFPKVKDPMVDDDPVSENYDQINVPKHRAPDATGNPRTTNKVSNTSDQDSRLKAIERTLSVLTNYVMRSEDGNNDRMSPLPSPLNTISPINNRLNFQEPKRYNPTVKVNPSDDDIMMYESAELKRVEEEIEELKRKILVRKKHDLRKLSLNNQLQELQSMMDGDDNIKLDNVSKHNHATHRHSSQSSRDYSPSSDACLECSNDLYEKNRVKPENNMSETFATPTPNNR.

A coiled-coil region spans residues 62-136 (INKAVQQNKE…DANSTFKEMR (75 aa)). A disordered region spans residues 160-184 (PKHRAPDATGNPRTTNKVSNTSDQD). A compositionally biased stretch (polar residues) spans 170 to 182 (NPRTTNKVSNTSD). Phosphoserine occurs at positions 213, 217, 284, and 329. Residues 248 to 297 (DDIMMYESAELKRVEEEIEELKRKILVRKKHDLRKLSLNNQLQELQSMMD) adopt a coiled-coil conformation. The disordered stretch occupies residues 310 to 363 (HNHATHRHSSQSSRDYSPSSDACLECSNDLYEKNRVKPENNMSETFATPTPNNR). The span at 319 to 329 (SQSSRDYSPSS) shows a compositional bias: low complexity. Over residues 349–363 (NNMSETFATPTPNNR) the composition is skewed to polar residues.

The protein belongs to the SPC42 family. As to quaternary structure, component of the SPC110 complex containing at least CMD1, SPC29, SPC42 and SCP110.

It is found in the nucleus. Its subcellular location is the cytoplasm. It localises to the cytoskeleton. The protein localises to the microtubule organizing center. The protein resides in the spindle pole body. In terms of biological role, forms a polymeric layer at the periphery of the spindle pole body (SPB) central plaque which has an essential function during SPB duplication and may facilitate attachment of the SPB to the nuclear membrane. The protein is Spindle pole body component SPC42 (SPC42) of Saccharomyces cerevisiae (strain RM11-1a) (Baker's yeast).